The primary structure comprises 371 residues: Ecto-ADP-ribosyltransferase 3 (371 aa).

The N-terminal stretch at 1–26 (MKMGHFEMVTTLLAAAVLMDIFQVKA) is a signal peptide. An intrachain disulfide couples cysteine 43 to cysteine 255. Residues 64–250 (ALLRMVWDNA…LVLQSINSTC (187 aa)) enclose the TR mART core domain. Residues tyrosine 101 and asparagine 182 each contribute to the NAD(+) site. Residues 306-346 (VLQTEENPLLPDEKPDRSRGKANNPTPGLVPGPKSHPSASS) are disordered. Serine 345 carries the GPI-anchor amidated serine lipid modification. The propeptide at 346 to 371 (SGNTLLPSVMASTILLVASAVNFIEL) is removed in mature form.

It belongs to the Arg-specific ADP-ribosyltransferase family.

Its subcellular location is the cell membrane. It carries out the reaction L-arginyl-[protein] + NAD(+) = N(omega)-(ADP-D-ribosyl)-L-arginyl-[protein] + nicotinamide + H(+). This is Ecto-ADP-ribosyltransferase 3 (Art3) from Mus musculus (Mouse).